Reading from the N-terminus, the 419-residue chain is UDP-N-acetylglucosamine 1-carboxyvinyltransferase 2 (419 aa).

Phosphoenolpyruvate is bound at residue 22–23; it reads KN. UDP-N-acetyl-alpha-D-glucosamine is bound at residue arginine 92. Cysteine 116 serves as the catalytic Proton donor. Cysteine 116 is subject to 2-(S-cysteinyl)pyruvic acid O-phosphothioketal. UDP-N-acetyl-alpha-D-glucosamine contacts are provided by residues 121-125, aspartate 306, and isoleucine 328; that span reads RPIDL.

It belongs to the EPSP synthase family. MurA subfamily.

The protein localises to the cytoplasm. It catalyses the reaction phosphoenolpyruvate + UDP-N-acetyl-alpha-D-glucosamine = UDP-N-acetyl-3-O-(1-carboxyvinyl)-alpha-D-glucosamine + phosphate. Its pathway is cell wall biogenesis; peptidoglycan biosynthesis. Its function is as follows. Cell wall formation. Adds enolpyruvyl to UDP-N-acetylglucosamine. The protein is UDP-N-acetylglucosamine 1-carboxyvinyltransferase 2 of Streptococcus mutans serotype c (strain ATCC 700610 / UA159).